Reading from the N-terminus, the 481-residue chain is Aspartyl/glutamyl-tRNA(Asn/Gln) amidotransferase subunit B (481 aa).

It belongs to the GatB/GatE family. GatB subfamily. In terms of assembly, heterotrimer of A, B and C subunits.

It carries out the reaction L-glutamyl-tRNA(Gln) + L-glutamine + ATP + H2O = L-glutaminyl-tRNA(Gln) + L-glutamate + ADP + phosphate + H(+). The enzyme catalyses L-aspartyl-tRNA(Asn) + L-glutamine + ATP + H2O = L-asparaginyl-tRNA(Asn) + L-glutamate + ADP + phosphate + 2 H(+). Its function is as follows. Allows the formation of correctly charged Asn-tRNA(Asn) or Gln-tRNA(Gln) through the transamidation of misacylated Asp-tRNA(Asn) or Glu-tRNA(Gln) in organisms which lack either or both of asparaginyl-tRNA or glutaminyl-tRNA synthetases. The reaction takes place in the presence of glutamine and ATP through an activated phospho-Asp-tRNA(Asn) or phospho-Glu-tRNA(Gln). The chain is Aspartyl/glutamyl-tRNA(Asn/Gln) amidotransferase subunit B from Pseudomonas putida (strain W619).